A 114-amino-acid chain; its full sequence is Dihydroneopterin monophosphate aldolase (114 aa).

Zn(2+) contacts are provided by histidine 15, histidine 26, and histidine 28.

This sequence belongs to the PTPS family. Zn(2+) is required as a cofactor.

The catalysed reaction is 7,8-dihydroneopterin 3'-phosphate = glycolaldehyde phosphate + 6-hydroxymethyl-7,8-dihydropterin. Its function is as follows. Catalyzes the conversion of 7,8-dihydroneopterin monophosphate (H2NMP) to 6-hydroxymethyl-7,8-dihydropterin (6-HMD). Cannot use 7,8-dihydroneopterin (H2Neo) or 7,8-dihydroneopterin triphosphate (H2NTP) as substrate. The polypeptide is Dihydroneopterin monophosphate aldolase (Pyrococcus furiosus (strain ATCC 43587 / DSM 3638 / JCM 8422 / Vc1)).